A 111-amino-acid polypeptide reads, in one-letter code: MNFDMSKLMQQAQKMQEQMKKAQQERENMEVIGESGAGLVSVTMTGKYDVKKVTIDDSLMSEDKEMLEDLIAAAVNSAVKKVEDSSSSADIGKMAKEAGIDLPNGFNFPFK.

The disordered stretch occupies residues 1–27 (MNFDMSKLMQQAQKMQEQMKKAQQERE). Basic and acidic residues predominate over residues 17–27 (EQMKKAQQERE).

Belongs to the YbaB/EbfC family. In terms of assembly, homodimer.

Its subcellular location is the cytoplasm. It localises to the nucleoid. Functionally, binds to DNA and alters its conformation. May be involved in regulation of gene expression, nucleoid organization and DNA protection. The protein is Nucleoid-associated protein Fphi_0115 of Francisella philomiragia subsp. philomiragia (strain ATCC 25017 / CCUG 19701 / FSC 153 / O#319-036).